A 621-amino-acid chain; its full sequence is Replication factor A protein 1 (621 aa).

Serine 2 carries the post-translational modification N-acetylserine. Serine 178 is modified (phosphoserine; by ATM or ATR). The OB DNA-binding region spans 197-284; the sequence is WTIKARVSYK…PYELNLDRDT (88 aa). The C4-type zinc finger occupies 486–508; it reads CSNENCNKKVLEQPDGTWRCEKC.

It belongs to the replication factor A protein 1 family. Component of the heterotrimeric canonical replication protein A complex (RPA). Interacts with POB3. Post-translationally, the N-terminus is blocked.

It is found in the nucleus. In terms of biological role, as part of the replication protein A (RPA/RP-A), a single-stranded DNA-binding heterotrimeric complex, may play an essential role in DNA replication, recombination and repair. Binds and stabilizes single-stranded DNA intermediates, preventing complementary DNA reannealing and recruiting different proteins involved in DNA metabolism. Binds to single-stranded sequences participating in DNA replication in addition to those mediating transcriptional repression (URS1) and activation (CAR1). Stimulates the activity of a cognate strand exchange protein (SEP1). It cooperates with T-AG and DNA topoisomerase I to unwind template DNA containing the simian virus 40 origin of DNA replication. This Saccharomyces cerevisiae (strain ATCC 204508 / S288c) (Baker's yeast) protein is Replication factor A protein 1 (RFA1).